Here is a 234-residue protein sequence, read N- to C-terminus: Purine nucleoside phosphorylase DeoD-type (234 aa).

His-5 provides a ligand contact to a purine D-ribonucleoside. Phosphate is bound by residues Gly-21, Arg-25, Arg-44, and 88 to 91 (RVGT). Residues 178–180 (EME) and 202–203 (SD) contribute to the a purine D-ribonucleoside site. Asp-203 serves as the catalytic Proton donor.

Belongs to the PNP/UDP phosphorylase family. In terms of assembly, homohexamer; trimer of homodimers.

It catalyses the reaction a purine D-ribonucleoside + phosphate = a purine nucleobase + alpha-D-ribose 1-phosphate. The catalysed reaction is a purine 2'-deoxy-D-ribonucleoside + phosphate = a purine nucleobase + 2-deoxy-alpha-D-ribose 1-phosphate. Catalyzes the reversible phosphorolytic breakdown of the N-glycosidic bond in the beta-(deoxy)ribonucleoside molecules, with the formation of the corresponding free purine bases and pentose-1-phosphate. The polypeptide is Purine nucleoside phosphorylase DeoD-type (Lactococcus lactis subsp. lactis (strain IL1403) (Streptococcus lactis)).